A 290-amino-acid polypeptide reads, in one-letter code: MKIAVYGKGGIGKSTTSCNISIALARRGKRVLQIGCDPKHDSTFTLTGFLIPTIIDTLQSKDYHYEDVWPEDVIYKGYGGVDCVEAGGPPAGAGCGGYVVGETVKLLKELNAFYEYDVILFDVLGDVVCGGFAAPLNYADYCIIITDNGFDALFAANRIAASVREKARTHPLRLAGLVGNRTSKRDLIDKYVEACPMPVLEVLPLIEDIRVSRVKGKTLFEMAESQESLNYVCDFYLNIADQILSCPEGVVPKEVPDRELFSLLSDFYLNPTLSEKENTLSPSSLDFMMV.

ATP is bound by residues 10 to 15 (GIGKST) and Lys39. Ser14 is a binding site for Mg(2+). 2 residues coordinate [4Fe-4S] cluster: Cys95 and Cys129. Residue 180 to 181 (NR) participates in ATP binding.

The protein belongs to the NifH/BchL/ChlL family. Homodimer. Protochlorophyllide reductase is composed of three subunits; ChlL, ChlN and ChlB. Requires [4Fe-4S] cluster as cofactor.

It localises to the plastid. Its subcellular location is the chloroplast. It catalyses the reaction chlorophyllide a + oxidized 2[4Fe-4S]-[ferredoxin] + 2 ADP + 2 phosphate = protochlorophyllide a + reduced 2[4Fe-4S]-[ferredoxin] + 2 ATP + 2 H2O. It functions in the pathway porphyrin-containing compound metabolism; chlorophyll biosynthesis (light-independent). Its function is as follows. Component of the dark-operative protochlorophyllide reductase (DPOR) that uses Mg-ATP and reduced ferredoxin to reduce ring D of protochlorophyllide (Pchlide) to form chlorophyllide a (Chlide). This reaction is light-independent. The L component serves as a unique electron donor to the NB-component of the complex, and binds Mg-ATP. In Chaetosphaeridium globosum (Charophycean green alga), this protein is Light-independent protochlorophyllide reductase iron-sulfur ATP-binding protein.